Reading from the N-terminus, the 359-residue chain is 4-galactosyl-N-acetylglucosaminide 3-alpha-L-fucosyltransferase FUT6 (359 aa).

At 1–14 the chain is on the cytoplasmic side; sequence MDPLGPAKPQWSCR. A helical; Signal-anchor for type II membrane protein membrane pass occupies residues 15–34; that stretch reads CCLTTLLFQLLVAVCFFSYL. Topologically, residues 35-359 are lumenal; that stretch reads RVSRDDPTVY…QTRSITAWFT (325 aa). N-linked (GlcNAc...) asparagine glycosylation is found at Asn46, Asn91, Asn153, and Asn184. The segment at 73 to 112 is determines site-specific fucosylation; the sequence is KPTALPRCSEMLPGTADCNITADRKVYPQADAVIVHHREV.

This sequence belongs to the glycosyltransferase 10 family. In terms of assembly, homodimer and monomer. Monomer (secreted form). N-glycosylated. Post-translationally, proteolytic cleavage releases a secreted glycoform of 43 kDa.

The protein localises to the golgi apparatus. It is found in the golgi stack membrane. Its subcellular location is the secreted. The catalysed reaction is a beta-D-galactosyl-(1-&gt;4)-N-acetyl-beta-D-glucosaminyl derivative + GDP-beta-L-fucose = a beta-D-galactosyl-(1-&gt;4)-[alpha-L-fucosyl-(1-&gt;3)]-N-acetyl-beta-D-glucosaminyl derivative + GDP + H(+). It catalyses the reaction an N-acetyl-alpha-neuraminyl-(2-&gt;3)-beta-D-galactosyl-(1-&gt;4)-N-acetyl-beta-D-glucosaminyl derivative + GDP-beta-L-fucose = an alpha-Neu5Ac-(2-&gt;3)-beta-D-Gal-(1-&gt;4)-[alpha-L-Fuc-(1-&gt;3)]-beta-D-GlcNAc derivative + GDP + H(+). The enzyme catalyses an alpha-Neu5Ac-(2-&gt;3)-beta-D-Gal-(1-&gt;4)-beta-D-GlcNAc-(1-&gt;3)-beta-D-Gal-(1-&gt;4)-[alpha-L-Fuc-(1-&gt;3)]-beta-D-GlcNAc derivative + GDP-beta-L-fucose = an alpha-Neu5Ac-(2-&gt;3)-beta-D-Gal-(1-&gt;4)-[alpha-L-Fuc-(1-&gt;3)]-beta-D-GlcNAc-(1-&gt;3)-beta-D-Gal-(1-&gt;4)-[alpha-L-Fuc-(1-&gt;3)]-beta-D-GlcNAc derivative + GDP + H(+). It carries out the reaction a neolactoside nLc6Cer + GDP-beta-L-fucose = beta-D-Gal-(1-&gt;4)-[alpha-L-Fuc-(1-&gt;3)]-beta-D-GlcNAc-(1-&gt;3)-beta-D-Gal-(1-&gt;4)-beta-D-GlcNAc-(1-&gt;3)-beta-D-Gal-(1-&gt;4)-beta-D-Glc-(1&lt;-&gt;1')-Cer + GDP + H(+). The catalysed reaction is a neolactoside nLc6Cer + GDP-beta-L-fucose = beta-D-galactosyl-(1-&gt;4)-N-acetyl-beta-D-glucosaminyl-(1-&gt;3)-beta-D-galactosyl-(1-&gt;4)-[alpha-L-fucosyl-(1-&gt;3)]-N-acetyl-beta-D-glucosaminyl-(1-&gt;3)-beta-D-galactosyl-(1-&gt;4)-beta-D-glucosyl-(1&lt;-&gt;1')-ceramide + GDP + H(+). It catalyses the reaction a neolactoside VI(3)-alpha-NeuNAc-nLc6Cer + GDP-beta-L-fucose = a neolactoside VI(3)-alpha-NeuAc,V(3)-alphaFuc-nLc6Cer + GDP + H(+). The enzyme catalyses beta-D-galactosyl-(1-&gt;4)-N-acetyl-D-glucosamine + GDP-beta-L-fucose = beta-D-galactosyl-(1-&gt;4)-[alpha-L-fucosyl-(1-&gt;3)]-N-acetyl-D-glucosamine + GDP + H(+). It carries out the reaction N-acetyl-alpha-neuraminosyl-(2-&gt;3)-beta-D-galactosyl-(1-&gt;4)-N-acetyl-beta-D-glucosamine + GDP-beta-L-fucose = N-acetyl-alpha-neuraminosyl-(2-&gt;3)-beta-D-galactosyl-(1-&gt;4)-[alpha-L-fucosyl-(1-&gt;3)]-N-acetyl-beta-D-glucosamine + GDP + H(+). The catalysed reaction is lactose + GDP-beta-L-fucose = beta-D-galactosyl-(1-&gt;4)-[alpha-L-fucosyl-(1-&gt;3)]-D-glucose + GDP + H(+). It catalyses the reaction alpha-L-Fuc-(1-&gt;2)-beta-D-Gal-(1-&gt;4)-D-Glc + GDP-beta-L-fucose = alpha-L-Fuc-(1-&gt;2)-beta-D-Gal-(1-&gt;4)-[alpha-L-Fuc-(1-&gt;3)]-D-Glc + GDP + H(+). The enzyme catalyses a beta-D-galactosyl-(1-&gt;4)-N-acetyl-beta-D-6-sulfooxy-glucosaminyl derivative + GDP-beta-L-fucose = a beta-D-galactosyl-(1-&gt;4)-[alpha-L-fucosyl-(1-&gt;3)]-N-acetyl-beta-D-6-sulfooxy-glucosaminyl derivative + GDP + H(+). The protein operates within protein modification; protein glycosylation. Its function is as follows. Catalyzes the transfer of L-fucose, from a guanosine diphosphate-beta-L-fucose, to the N-acetyl glucosamine (GlcNAc) of a distal alpha2,3 sialylated lactosamine unit of a glycoprotein- or glycolipid-linked sialopolylactosamines chain or of a distal or internal lactosamine unit of a neutral glycoprotein- or glycolipid-linked polylactosamines chain through an alpha-1,3 glycosidic linkage and participates in surface expression of the sialyl Lewis X (sLe(x)), Lewis X (Le(x)) and non sialylated VIM2 determinants. Moreover transfers fucose to H-type 2 (Fucalpha1-2Galbeta1-4GlcNAc) chain acceptor substrates and participates in difucosylated sialyl Lewis x determinants. Also fucosylates a polylactosamine substrate having a 6 sulfate modification at the GlcNAc moiety and gives rise to sialyl and non-sialyl 6-sulfo lewis X. Does not have activity towards type 1 ((Galbeta1-3GlcNAc)) and H-type 1 chain (Fucalpha1-2Galbeta1-3GlcNAc) acceptors substrates. The polypeptide is 4-galactosyl-N-acetylglucosaminide 3-alpha-L-fucosyltransferase FUT6 (Gorilla gorilla gorilla (Western lowland gorilla)).